The sequence spans 248 residues: Protein-lysine N-methyltransferase EFM5 (248 aa).

The protein belongs to the class I-like SAM-binding methyltransferase superfamily. EFM5 family.

The protein localises to the cytoplasm. In terms of biological role, S-adenosyl-L-methionine-dependent protein-lysine N-methyltransferase that trimethylates elongation factor 1-alpha (TEF1 and TEF2) at 'Lys-79'. Required for replication of Brome mosaic virus (BMV). The chain is Protein-lysine N-methyltransferase EFM5 from Saccharomyces cerevisiae (strain ATCC 204508 / S288c) (Baker's yeast).